Consider the following 65-residue polypeptide: Large ribosomal subunit protein bL31 (65 aa).

Cysteine 16, cysteine 18, cysteine 36, and cysteine 39 together coordinate Zn(2+).

The protein belongs to the bacterial ribosomal protein bL31 family. Type A subfamily. In terms of assembly, part of the 50S ribosomal subunit. It depends on Zn(2+) as a cofactor.

Its function is as follows. Binds the 23S rRNA. The sequence is that of Large ribosomal subunit protein bL31 from Geotalea uraniireducens (strain Rf4) (Geobacter uraniireducens).